The chain runs to 30 residues: GWKDWLKTAGGWLKKKGPSILKAVVGAATQ.

It belongs to the ponericin-G family. In terms of tissue distribution, expressed by the venom gland.

The protein resides in the secreted. Its function is as follows. Has activity against some Gram-positive bacteria and S.cerevisiae. Has a non-hemolytic activity. This chain is U1-poneritoxin-Ni3d, found in Neoponera inversa (Ant).